Here is a 116-residue protein sequence, read N- to C-terminus: Venom nerve growth factor (116 aa).

3 disulfide bridges follow: Cys14-Cys78, Cys56-Cys106, and Cys66-Cys108. Lys86 provides a ligand contact to a 1,2-diacyl-sn-glycerol.

The protein belongs to the NGF-beta family. Homodimer; non-covalently linked. Interacts with NTRK1. Not glycosylated. In terms of tissue distribution, expressed by the venom gland.

The protein resides in the secreted. In terms of biological role, nerve growth factor is important for the development and maintenance of the sympathetic and sensory nervous systems. It stimulates division and differentiation of sympathetic and embryonic sensory neurons as well as basal forebrain cholinergic neurons in the brain. Its relevance in the snake venom is not clear. However, it has been shown to inhibit metalloproteinase-dependent proteolysis of platelet glycoprotein Ib alpha, suggesting a metalloproteinase inhibition to prevent metalloprotease autodigestion and/or protection against prey proteases. Binds a lipid between the two protein chains in the homodimer. The lipid-bound form promotes histamine relase from mouse mast cells, contrary to the lipid-free form. The polypeptide is Venom nerve growth factor (Naja atra (Chinese cobra)).